The sequence spans 184 residues: Protein Syd (184 aa).

It belongs to the Syd family.

Its subcellular location is the cell inner membrane. Its function is as follows. Interacts with the SecY protein in vivo. May bind preferentially to an uncomplexed state of SecY, thus functioning either as a chelating agent for excess SecY in the cell or as a regulatory factor that negatively controls the translocase function. The protein is Protein Syd of Edwardsiella ictaluri (strain 93-146).